The primary structure comprises 233 residues: Lipoprotein-releasing system ATP-binding protein LolD (233 aa).

The region spanning leucine 6–glutamate 233 is the ABC transporter domain. Residue glycine 42–serine 49 participates in ATP binding.

It belongs to the ABC transporter superfamily. Lipoprotein translocase (TC 3.A.1.125) family. The complex is composed of two ATP-binding proteins (LolD) and two transmembrane proteins (LolC and LolE).

It is found in the cell inner membrane. In terms of biological role, part of the ABC transporter complex LolCDE involved in the translocation of mature outer membrane-directed lipoproteins, from the inner membrane to the periplasmic chaperone, LolA. Responsible for the formation of the LolA-lipoprotein complex in an ATP-dependent manner. The sequence is that of Lipoprotein-releasing system ATP-binding protein LolD from Shigella dysenteriae serotype 1 (strain Sd197).